A 488-amino-acid chain; its full sequence is MSPVYVNLLGSVGLLAFWYFSYRWIQRKRLEDPLPPWLRKKKACALTRRSRHRLRRQHGVIDGENSETERSVDLVAALLAEAGEESVTEDTEREDTEEEREDEEEENEARTPEVNPMDAEGLSGLAREACEALKKALRRHRFLWQRRRRARLLQHNGPQQSHHAAVFCRVHGLRGFQVSVWLLLTLFWSTGYGVSVRCTYHGTDINVTSNATSMNCRLNCTCNHTQIYNGPCAGAESKLPLNVTFRQSRRQWHSVMLTFGFQYHLEGWFPLRILNESRDINVTEVYGEVACFTNDTNITMGQLTLNLTGRSYVLRALARTSPFESSVNWEETNVTDNATSSENNTVTVMSVLTVYAESDYIFLQDMCPRFLKRSVKLAKNNRRNTTFTGTNVTSLPEWTLQQCQGWKYWTTLSIMWKNRRSALLRAKSRALGHWALLSICTVAAGSIALLSLFCILLIGLRRDLLEDFRYICRDEGSSSTKNDVHWIV.

An N-terminal signal peptide occupies residues 1–22 (MSPVYVNLLGSVGLLAFWYFSY). The span at 83–107 (GEESVTEDTEREDTEEEREDEEEEN) shows a compositional bias: acidic residues. Residues 83 to 119 (GEESVTEDTEREDTEEEREDEEEENEARTPEVNPMDA) form a disordered region. N-linked (GlcNAc...) asparagine; by host glycans are attached at residues Asn206, Asn210, Asn219, Asn223, Asn242, Asn275, Asn281, Asn294, Asn297, Asn306, Asn333, Asn337, Asn343, Asn384, and Asn391. The chain crosses the membrane as a helical span at residues 439–459 (ICTVAAGSIALLSLFCILLIG).

It belongs to the immediate early glycoprotein family. As to quaternary structure, interacts with host BAX. Interacts with host RSAD2/viperin; this interaction results in RSAD2/viperin relocalization from the endoplasmic reticulum to the mitochondria, actin cytoskeleton disruption and enhancement of infection. Interacts with host PEX19; this interaction inhibits the peroxisomal-dependent antiviral signaling. Interacts with host CHCHD6; this interaction rewires mitochondria by engaging the conserved MICOS complex.

The protein localises to the host membrane. It is found in the host endoplasmic reticulum membrane. The protein resides in the host Golgi apparatus membrane. Its subcellular location is the host mitochondrion membrane. It localises to the host peroxisome. Its function is as follows. Multifunctional transmembrane protein that plays several key roles in viral replication. Rapidely traffics from the host endoplasmic reticulum to the outer mitochondrial membrane where it acts to inhibit host immune response, block apoptotic signaling, regulate calcium flux, and induce mitochondrial fragmentation. Sequesters proapoptotic BAX at the outer mitochondrial membrane and prevents cytochrome c release and subsequent initiation of the proapoptotic cascade. Also provoques a calcium efflux from host endoplasmic reticulum and F-actin cytoskeleton disruption. Participates in the increase of host mitochondrial biogenesis, thus promoting viral replication by efficient use of newly made mitochondria. Additionally, a subset of vMIA localizes to peroxisomes, causing fragmentation and blocking peroxisomal MAVS signaling. Mechanistically, inhibits host MAVS oligomerization at peroxisomes in a mitochondrial fission factors (MFF)-dependent manner and in mitochondria independently of mitochondrial fission factors. Plays an essential role in the trafficking of host viperin/RSAD2 from the endoplasmic reticulum to the viral assembly compartment via the mitochondria during viral infection as failure of viperin to localize to the mitochondria results in insufficient lipogenesis and thus reduces viral replication. May play a role in escape from the host antiviral response. The polypeptide is UL37 immediate early glycoprotein (UL37) (Homo sapiens (Human)).